The chain runs to 252 residues: MERLLIVNADDFGLSKGQNYGIIEACRNGIVTSTTALVNGQAIDHAVQLSRDEPSLAIGMHFVLTMGKPLTAMPGLTRDGVLGKWIWQLAEEDALPLEEITQELASQYLRFIELFGRKPTHLDSHHHVHMFPQIFPIVAKFAAEEGIALRIDRQPLSNDGDLPANLRSSQGFSSAFYGEEISEALFLQVLDDSSHRGERSLEVMCHPAFVDNTIRQSAYCFPRLTELDVLTSASLKYAIAERGYRLGSYHDV.

His-61 and His-125 together coordinate Mg(2+).

This sequence belongs to the YdjC deacetylase family. ChbG subfamily. As to quaternary structure, homodimer. It depends on Mg(2+) as a cofactor.

It localises to the cytoplasm. The enzyme catalyses N,N'-diacetylchitobiose + H2O = N-acetyl-beta-D-glucosaminyl-(1-&gt;4)-D-glucosamine + acetate. The catalysed reaction is diacetylchitobiose-6'-phosphate + H2O = N'-monoacetylchitobiose-6'-phosphate + acetate. The protein operates within glycan degradation; chitin degradation. In terms of biological role, involved in the degradation of chitin. ChbG is essential for growth on the acetylated chitooligosaccharides chitobiose and chitotriose but is dispensable for growth on cellobiose and chitosan dimer, the deacetylated form of chitobiose. Deacetylation of chitobiose-6-P and chitotriose-6-P is necessary for both the activation of the chb promoter by the regulatory protein ChbR and the hydrolysis of phosphorylated beta-glucosides by the phospho-beta-glucosidase ChbF. Catalyzes the removal of only one acetyl group from chitobiose-6-P to yield monoacetylchitobiose-6-P, the inducer of ChbR and the substrate of ChbF. This is Chitooligosaccharide deacetylase from Escherichia coli O6:H1 (strain CFT073 / ATCC 700928 / UPEC).